A 375-amino-acid chain; its full sequence is MKNKYYPLRSSMDELSTKNDNEIDLEKGPLPEYNSEDGSTLPPYSENLNLKDPKQMGQSITKLFNWNKSTTPPDYDENRLLITDEGNNPPNTHRENHSSGTTDNSSPFLIKLLISFTSIILFNAPAVCYLKYKDAFFKNYGAAEWTLIGFWCASSLIIFTFSWCFYETWTKAVKVTVIFLAQCIKVTAISLAKCVKVISIGLFNIRREMMIIIWILWLIICCILFGCVKDGRLNLNKALICSTCTISAVLFLIVSSVCIPIWTLWRALSGMLQVLGIHGIIALLVNGLMSLFGKHFGWRGYEIEGFVLFFTGNALFLYEMERPGVLKRMRNTTRNVIGFILGGIANAIGGIANAIGGANDNNDIPLGELEVESEV.

Disordered stretches follow at residues M1 to P42 and D74 to D103. The segment covering S11 to P29 has biased composition (basic and acidic residues). 7 consecutive transmembrane segments (helical) span residues F108–C128, W145–F165, A172–A192, E208–V228, T245–W265, L272–F292, and V336–G356.

The protein belongs to the WTF family. Homomer. Forms protein aggregates. The two isoforms can interact with each other and with themselves. High sequence similarity is required for their interaction.

It localises to the spore membrane. The protein localises to the vacuole. The protein resides in the membrane. Its subcellular location is the ascus epiplasm. It is found in the cytoplasm. It localises to the endoplasmic reticulum. In terms of biological role, promotes unequal transmission of alleles from the parental zygote to progeny spores by acting as poison/antidote system where the poison and antidote proteins are produced from the same locus; the poison component is trans-acting and targets all spores within an ascus whereas the antidote component is spore-specific, leading to poisoning of all progeny that do not inherit the allele. Functionally, localizes isoform 2 to the vacuole thereby facilitating its degradation. Its function is as follows. Forms toxic aggregates that disrupt spore maturation. This Schizosaccharomyces pombe (Fission yeast) protein is Meiotic driver cw27.